The chain runs to 287 residues: MEGIIVINKPKGITSFDVIRKLKKFLKTKKIGHTGTLDPLAIGVMLVCVGKATKLASDLEAKDKVYIADFDIGYATDTYDIEGKKIAENIIEVSKENLEQSLKKFIGNIKQVPPMYSAIKIDGNKLYHLARKGIEVERPERDITIEYINLLDFKDNKAKIETKVSKGCYIRSLIYDIGQDLGTYATMTALQRKQVGEYSLENSYSLEQIEEMTLNNNFKFLKTIEEIFSYDKYNLQTEKEFILYKNGNTVKIKENLENKKYRIYFQDEFIGLANIENNNLLKGYKYY.

Asp38 acts as the Nucleophile in catalysis.

It belongs to the pseudouridine synthase TruB family. Type 1 subfamily.

The enzyme catalyses uridine(55) in tRNA = pseudouridine(55) in tRNA. Responsible for synthesis of pseudouridine from uracil-55 in the psi GC loop of transfer RNAs. This chain is tRNA pseudouridine synthase B, found in Fusobacterium nucleatum subsp. nucleatum (strain ATCC 25586 / DSM 15643 / BCRC 10681 / CIP 101130 / JCM 8532 / KCTC 2640 / LMG 13131 / VPI 4355).